We begin with the raw amino-acid sequence, 169 residues long: Probable metallophosphoesterase YsnB (169 aa).

7 residues coordinate Mn(2+): D8, H10, D35, N54, H78, H107, and H109.

This sequence belongs to the metallophosphoesterase superfamily. YfcE family. Mn(2+) serves as cofactor.

The chain is Probable metallophosphoesterase YsnB (ysnB) from Bacillus subtilis (strain 168).